The chain runs to 321 residues: Annexin B10 (321 aa).

4 Annexin repeats span residues 15 to 86, 87 to 158, 171 to 243, and 247 to 319; these read FDAS…GLMM, PPVE…LIVT, GQAK…AIVE, and SPAA…ALLG.

Belongs to the annexin family.

The chain is Annexin B10 (AnxB10) from Drosophila melanogaster (Fruit fly).